A 406-amino-acid polypeptide reads, in one-letter code: Cysteine desulfurase (406 aa).

Position 226 is an N6-(pyridoxal phosphate)lysine (Lys226). Cys364 serves as the catalytic Cysteine persulfide intermediate.

This sequence belongs to the class-V pyridoxal-phosphate-dependent aminotransferase family. Csd subfamily. As to quaternary structure, homodimer. Interacts with SufE and the SufBCD complex composed of SufB, SufC and SufD. The interaction with SufE is required to mediate the direct transfer of the sulfur atom from the S-sulfanylcysteine. It depends on pyridoxal 5'-phosphate as a cofactor.

It is found in the cytoplasm. It carries out the reaction (sulfur carrier)-H + L-cysteine = (sulfur carrier)-SH + L-alanine. The enzyme catalyses L-selenocysteine + AH2 = hydrogenselenide + L-alanine + A + H(+). It participates in cofactor biosynthesis; iron-sulfur cluster biosynthesis. In terms of biological role, cysteine desulfurases mobilize the sulfur from L-cysteine to yield L-alanine, an essential step in sulfur metabolism for biosynthesis of a variety of sulfur-containing biomolecules. Component of the suf operon, which is activated and required under specific conditions such as oxidative stress and iron limitation. Acts as a potent selenocysteine lyase in vitro, that mobilizes selenium from L-selenocysteine. Selenocysteine lyase activity is however unsure in vivo. This Klebsiella pneumoniae subsp. pneumoniae (strain ATCC 700721 / MGH 78578) protein is Cysteine desulfurase.